Consider the following 188-residue polypeptide: MAEIVVHCEDKAGKEIYTKVIQTALEDLLLGKSIIRVEFIAKEKEPYFILGVLPKHTRRAIKLRDFAEIVEQKKEGGKIIYKLKITDETYLPHLLKKIHVIDQPSRFEVVTDSDIDLDMEVYDAGKDFIDKVMDFMGRVFPEGMRIKNTYIDKAIVCIASERPLKDEEIEEALKLKDKLEKMNTAGYY.

This is an uncharacterized protein from Methanocaldococcus jannaschii (strain ATCC 43067 / DSM 2661 / JAL-1 / JCM 10045 / NBRC 100440) (Methanococcus jannaschii).